The chain runs to 203 residues: NADH dehydrogenase [ubiquinone] 1 alpha subcomplex assembly factor 4 (203 aa).

It belongs to the NDUFAF4 family. Together with NdufAF3 associates with mitochondrial complex I assembly intermediates during its biogenesis.

Involved in the assembly of mitochondrial NADH:ubiquinone oxidoreductase complex (complex I). Together with NdufAF3, involved in biogenesis of complex 1 modules N, Q and P-peripheral, but not the P-distal module. Required for recruitment of the complex I assembly factor Timmdc1 to complex 1 assembly intermediates. The polypeptide is NADH dehydrogenase [ubiquinone] 1 alpha subcomplex assembly factor 4 (Drosophila melanogaster (Fruit fly)).